The sequence spans 281 residues: Acetyl-coenzyme A carboxylase carboxyl transferase subunit beta (281 aa).

The CoA carboxyltransferase N-terminal domain occupies 23-281; the sequence is IWTKCGSCQA…SLLVKLHYKN (259 aa). C27, C30, C46, and C49 together coordinate Zn(2+). Residues 27 to 49 form a C4-type zinc finger; it reads CGSCQAVLYKSELEKLQEVCPKC.

It belongs to the AccD/PCCB family. In terms of assembly, acetyl-CoA carboxylase is a heterohexamer composed of biotin carboxyl carrier protein (AccB), biotin carboxylase (AccC) and two subunits each of ACCase subunit alpha (AccA) and ACCase subunit beta (AccD). Zn(2+) serves as cofactor.

Its subcellular location is the cytoplasm. It catalyses the reaction N(6)-carboxybiotinyl-L-lysyl-[protein] + acetyl-CoA = N(6)-biotinyl-L-lysyl-[protein] + malonyl-CoA. It functions in the pathway lipid metabolism; malonyl-CoA biosynthesis; malonyl-CoA from acetyl-CoA: step 1/1. Functionally, component of the acetyl coenzyme A carboxylase (ACC) complex. Biotin carboxylase (BC) catalyzes the carboxylation of biotin on its carrier protein (BCCP) and then the CO(2) group is transferred by the transcarboxylase to acetyl-CoA to form malonyl-CoA. This is Acetyl-coenzyme A carboxylase carboxyl transferase subunit beta from Alteromonas mediterranea (strain DSM 17117 / CIP 110805 / LMG 28347 / Deep ecotype).